Consider the following 94-residue polypeptide: Integration host factor subunit beta (94 aa).

It belongs to the bacterial histone-like protein family. Heterodimer of an alpha and a beta chain.

This protein is one of the two subunits of integration host factor, a specific DNA-binding protein that functions in genetic recombination as well as in transcriptional and translational control. The protein is Integration host factor subunit beta (ihfB) of Dickeya dadantii (strain 3937) (Erwinia chrysanthemi (strain 3937)).